The chain runs to 279 residues: Oxygen-dependent coproporphyrinogen-III oxidase (279 aa).

Serine 102 is a substrate binding site. 2 residues coordinate a divalent metal cation: histidine 106 and histidine 116. Histidine 116 acts as the Proton donor in catalysis. 118 to 120 (NTR) is a binding site for substrate. 2 residues coordinate a divalent metal cation: histidine 149 and histidine 179. The interval 244–279 (YVEFNLLYDRGTKFGLMTDGNVEAILMSLPPEVKFN) is important for dimerization.

Belongs to the aerobic coproporphyrinogen-III oxidase family. Homodimer. A divalent metal cation serves as cofactor.

The protein localises to the cytoplasm. It carries out the reaction coproporphyrinogen III + O2 + 2 H(+) = protoporphyrinogen IX + 2 CO2 + 2 H2O. It participates in porphyrin-containing compound metabolism; protoporphyrin-IX biosynthesis; protoporphyrinogen-IX from coproporphyrinogen-III (O2 route): step 1/1. Its function is as follows. Involved in the heme biosynthesis. Catalyzes the aerobic oxidative decarboxylation of propionate groups of rings A and B of coproporphyrinogen-III to yield the vinyl groups in protoporphyrinogen-IX. This is Oxygen-dependent coproporphyrinogen-III oxidase from Rickettsia akari (strain Hartford).